A 291-amino-acid polypeptide reads, in one-letter code: Inhibitory synaptic factor 1 (291 aa).

The tract at residues 1–25 is disordered; it reads MNIRGAPDLGQPSDDPNSGGERERI. Positions 30–63 form a coiled coil; that stretch reads KMVIGQLEGILRELKEVAKELREVVSQIDKLTSD. 2 disordered regions span residues 120 to 186 and 201 to 291; these read TPSD…ERVR and EEGD…KGKN. The span at 201-213 shows a compositional bias: acidic residues; sequence EEGDGEEVEEEEA. A compositionally biased stretch (polar residues) spans 262-284; that stretch reads RNSSTQTVSDKSTQTVLPYTATK.

The protein belongs to the INSYN1 family. In terms of assembly, interacts with GPHN.

It is found in the postsynaptic density. Component of the protein machinery at the inhibitory synapses, probably acting as a scaffold. Inhibitory synapses dampen neuronal activity through postsynaptic hyperpolarization. This synaptic inhibition is fundamental for the functioning of the central nervous system, shaping and orchestrating the flow of information through neuronal networks to generate a precise neural code. This Rattus norvegicus (Rat) protein is Inhibitory synaptic factor 1 (Insyn1).